The chain runs to 366 residues: ATP-dependent 6-phosphofructokinase (366 aa).

ATP is bound by residues Gly-16, 78-79 (RE), and 118-121 (GNGT). The interval 74-94 (LGTSREKPFKPDPGEKDSEAG) is disordered. The span at 77 to 94 (SREKPFKPDPGEKDSEAG) shows a compositional bias: basic and acidic residues. A Mg(2+)-binding site is contributed by Asn-119. Residues 141–143 (TID), Arg-178, 185–187 (MGH), Glu-238, Arg-282, and 288–291 (YLQR) each bind substrate. Catalysis depends on Asp-143, which acts as the Proton acceptor.

This sequence belongs to the phosphofructokinase type A (PFKA) family. Mixed-substrate PFK group III subfamily. Homodimer or homotetramer. It depends on Mg(2+) as a cofactor.

The protein localises to the cytoplasm. It catalyses the reaction beta-D-fructose 6-phosphate + ATP = beta-D-fructose 1,6-bisphosphate + ADP + H(+). It functions in the pathway carbohydrate degradation; glycolysis; D-glyceraldehyde 3-phosphate and glycerone phosphate from D-glucose: step 3/4. Catalyzes the phosphorylation of D-fructose 6-phosphate to fructose 1,6-bisphosphate by ATP, the first committing step of glycolysis. The chain is ATP-dependent 6-phosphofructokinase from Spirochaeta thermophila (strain ATCC 49972 / DSM 6192 / RI 19.B1).